Here is a 65-residue protein sequence, read N- to C-terminus: Large ribosomal subunit protein bL35 (65 aa).

This sequence belongs to the bacterial ribosomal protein bL35 family.

This Burkholderia ambifaria (strain MC40-6) protein is Large ribosomal subunit protein bL35.